The chain runs to 414 residues: Lactosylceramide alpha-2,3-sialyltransferase (414 aa).

The Cytoplasmic portion of the chain corresponds to 1 to 65; the sequence is MHTEAVGGAA…MRRPSLLIKD (65 aa). Residues 66–86 traverse the membrane as a helical; Signal-anchor for type II membrane protein segment; that stretch reads ICKCTLVAFGVWLLYILILNY. At 87-414 the chain is on the lumenal side; the sequence is TAEECDMKRM…VVEDLSGGIH (328 aa). A disulfide bridge connects residues C194 and C352. 3 N-linked (GlcNAc...) asparagine glycosylation sites follow: N235, N279, and N389.

Belongs to the glycosyltransferase 29 family. Mainly expressed in brain, and then testis, heart and liver, almost all tissues showed some levels of the gene expression.

The protein resides in the golgi apparatus membrane. It carries out the reaction a beta-D-Gal-(1-&gt;4)-beta-D-Glc-(1&lt;-&gt;1)-Cer(d18:1(4E)) + CMP-N-acetyl-beta-neuraminate = a ganglioside GM3 (d18:1(4E)) + CMP + H(+). The catalysed reaction is ganglioside GA2 (d18:1(4E)/18:0) + CMP-N-acetyl-beta-neuraminate = ganglioside GM2 (d18:1(4E)/18:0) + CMP + H(+). It catalyses the reaction a beta-D-Gal-(1&lt;-&gt;1')-ceramide + CMP-N-acetyl-beta-neuraminate = N-acetyl-alpha-neuraminosyl-(2-&gt;3)-beta-D-galactosyl-(1&lt;-&gt;1')-ceramide + CMP + H(+). The enzyme catalyses ganglioside GA1 (d18:1(4E)/18:0) + CMP-N-acetyl-beta-neuraminate = ganglioside GM1 (d18:1(4E)/18:0) + CMP + H(+). Its function is as follows. (Microbial infection) Gangliosides GD1b and GT1b (derived from GM3) may serve as receptors for some C.botulinum neurotoxins (minimally types BoNT/A, B, C). In terms of biological role, transfers the sialyl group (N-acetyl-alpha-neuraminyl or NeuAc) from CMP-NeuAc to the non-reducing terminal galactose (Gal) of glycosphingolipids forming gangliosides (important molecules involved in the regulation of multiple cellular processes, including cell proliferation and differentiation, apoptosis, embryogenesis, development, and oncogenesis). Mainly involved in the biosynthesis of ganglioside GM3 but can also use different glycolipids as substrate acceptors such as D-galactosylceramide (GalCer), asialo-GM2 (GA2) and asialo-GM1 (GA1), although less preferentially than beta-D-Gal-(1-&gt;4)-beta-D-Glc-(1&lt;-&gt;1)-Cer (LacCer). This Mus musculus (Mouse) protein is Lactosylceramide alpha-2,3-sialyltransferase (St3gal5).